We begin with the raw amino-acid sequence, 119 residues long: Holo-[acyl-carrier-protein] synthase (119 aa).

Asp-8 and Glu-59 together coordinate Mg(2+).

This sequence belongs to the P-Pant transferase superfamily. AcpS family. The cofactor is Mg(2+).

The protein localises to the cytoplasm. The enzyme catalyses apo-[ACP] + CoA = holo-[ACP] + adenosine 3',5'-bisphosphate + H(+). Transfers the 4'-phosphopantetheine moiety from coenzyme A to a Ser of acyl-carrier-protein. The protein is Holo-[acyl-carrier-protein] synthase of Staphylococcus aureus (strain USA300).